A 689-amino-acid chain; its full sequence is DNA ligase (689 aa).

Residues 40–44 (DSEYD), 89–90 (SL), and Glu-121 each bind NAD(+). Catalysis depends on Lys-123, which acts as the N6-AMP-lysine intermediate. Positions 144, 179, 295, and 319 each coordinate NAD(+). 4 residues coordinate Zn(2+): Cys-413, Cys-416, Cys-431, and Cys-437. The BRCT domain maps to 610–689 (REQSSLTDKI…EEWLTLIKNV (80 aa)).

It belongs to the NAD-dependent DNA ligase family. LigA subfamily. Mg(2+) is required as a cofactor. Mn(2+) serves as cofactor.

The catalysed reaction is NAD(+) + (deoxyribonucleotide)n-3'-hydroxyl + 5'-phospho-(deoxyribonucleotide)m = (deoxyribonucleotide)n+m + AMP + beta-nicotinamide D-nucleotide.. In terms of biological role, DNA ligase that catalyzes the formation of phosphodiester linkages between 5'-phosphoryl and 3'-hydroxyl groups in double-stranded DNA using NAD as a coenzyme and as the energy source for the reaction. It is essential for DNA replication and repair of damaged DNA. The protein is DNA ligase of Rickettsia rickettsii (strain Iowa).